Here is a 235-residue protein sequence, read N- to C-terminus: Class B acid phosphatase (235 aa).

The signal sequence occupies residues 1–22; that stretch reads MKNLVKLSLIAMLTAATLPAMA. The active-site Nucleophile is the Asp67. Mg(2+)-binding residues include Asp67 and Asp69. The active-site Proton donor is the Asp69. Substrate contacts are provided by residues 135–136 and Lys175; that span reads TG. Residue Asp190 participates in Mg(2+) binding.

This sequence belongs to the class B bacterial acid phosphatase family. As to quaternary structure, homotetramer. Mg(2+) serves as cofactor.

The protein localises to the periplasm. It carries out the reaction a phosphate monoester + H2O = an alcohol + phosphate. Its function is as follows. Dephosphorylates several organic phosphate monoesters. Also has a phosphotransferase activity catalyzing the transfer of low-energy phosphate groups from organic phosphate monoesters to free hydroxyl groups of various organic compounds. The sequence is that of Class B acid phosphatase from Aggregatibacter actinomycetemcomitans serotype C (strain D11S-1) (Actinobacillus actinomycetemcomitans).